We begin with the raw amino-acid sequence, 301 residues long: Putative S-adenosyl-L-methionine-dependent methyltransferase MAP_3777 (301 aa).

Residues Asp-126 and 155 to 156 (DL) each bind S-adenosyl-L-methionine.

The protein belongs to the UPF0677 family.

Functionally, exhibits S-adenosyl-L-methionine-dependent methyltransferase activity. The sequence is that of Putative S-adenosyl-L-methionine-dependent methyltransferase MAP_3777 from Mycolicibacterium paratuberculosis (strain ATCC BAA-968 / K-10) (Mycobacterium paratuberculosis).